The chain runs to 636 residues: 1-deoxy-D-xylulose-5-phosphate synthase (636 aa).

Thiamine diphosphate-binding positions include His74 and 115–117; that span reads GHA. Position 146 (Asp146) interacts with Mg(2+). Thiamine diphosphate-binding positions include 147–148, Asn175, Tyr285, and Glu368; that span reads GA. Asn175 serves as a coordination point for Mg(2+).

This sequence belongs to the transketolase family. DXPS subfamily. Homodimer. The cofactor is Mg(2+). Thiamine diphosphate is required as a cofactor.

The enzyme catalyses D-glyceraldehyde 3-phosphate + pyruvate + H(+) = 1-deoxy-D-xylulose 5-phosphate + CO2. Its pathway is metabolic intermediate biosynthesis; 1-deoxy-D-xylulose 5-phosphate biosynthesis; 1-deoxy-D-xylulose 5-phosphate from D-glyceraldehyde 3-phosphate and pyruvate: step 1/1. Catalyzes the acyloin condensation reaction between C atoms 2 and 3 of pyruvate and glyceraldehyde 3-phosphate to yield 1-deoxy-D-xylulose-5-phosphate (DXP). The sequence is that of 1-deoxy-D-xylulose-5-phosphate synthase from Anaeromyxobacter dehalogenans (strain 2CP-C).